Reading from the N-terminus, the 46-residue chain is Iota-conotoxin-like R11.17 (46 aa).

4-hydroxyproline occurs at positions 2 and 11. 4 cysteine pairs are disulfide-bonded: Cys-5–Cys-19, Cys-12–Cys-22, Cys-18–Cys-27, and Cys-21–Cys-38. Pro-29 is modified (4-hydroxyproline). D-phenylalanine is present on Phe-44.

The protein belongs to the conotoxin I1 superfamily. As to expression, expressed by the venom duct.

The protein localises to the secreted. Iota-conotoxins bind to voltage-gated sodium channels (Nav) and act as agonists by shifting the voltage-dependence of activation to more hyperpolarized levels. Produces general excitatory symptoms. The sequence is that of Iota-conotoxin-like R11.17 from Conus radiatus (Rayed cone).